A 99-amino-acid polypeptide reads, in one-letter code: High mobility group nucleosome-binding domain-containing protein 3 (99 aa).

3 stretches are compositionally biased toward basic and acidic residues: residues M1–R25, P39–G53, and G62–K72. The tract at residues M1–E99 is disordered. S6 carries the phosphoserine modification. T10 carries the post-translational modification Phosphothreonine. A phosphoserine mark is found at S78 and S93. Positions G81–S93 are enriched in basic and acidic residues.

Belongs to the HMGN family. Interacts with the ligand binding domain of the thyroid receptor (TR) (in vitro). Requires the presence of thyroid hormone for its interaction. Interacts with transcriptional regulator SEHBP. Interacts with nucleosomes.

Its subcellular location is the nucleus. In terms of biological role, binds to nucleosomes, regulating chromatin structure and consequently, chromatin-dependent processes such as transcription, DNA replication and DNA repair. Affects both insulin and glucagon levels and modulates the expression of pancreatic genes involved in insulin secretion. Regulates the expression of the glucose transporter SLC2A2 by binding specifically to its promoter region and recruiting PDX1 and additional transcription factors. Regulates the expression of SLC6A9, a glycine transporter which regulates the glycine concentration in synaptic junctions in the central nervous system, by binding to its transcription start site. May play a role in ocular development and astrocyte function. The protein is High mobility group nucleosome-binding domain-containing protein 3 (HMGN3) of Pongo abelii (Sumatran orangutan).